Here is a 104-residue protein sequence, read N- to C-terminus: uncharacterized protein (104 aa).

A run of 2 helical transmembrane segments spans residues 53-73 (IWGIISFIISASIFCYINWDF) and 74-94 (ILNLLFYSIIAFIVMSILILI).

Its subcellular location is the cell membrane. This is an uncharacterized protein from Methanocaldococcus jannaschii (strain ATCC 43067 / DSM 2661 / JAL-1 / JCM 10045 / NBRC 100440) (Methanococcus jannaschii).